Reading from the N-terminus, the 412-residue chain is Lysosomal phospholipase A and acyltransferase (412 aa).

The signal sequence occupies residues 1 to 33 (MDRHLCTCRETQLRSGLLLPLFLLMMLADLTLP). Residue Asp-46 coordinates substrate. A disulfide bond links Cys-65 and Cys-89. Residue Asn-99 is glycosylated (N-linked (GlcNAc...) asparagine). Residue Ser-198 is the Acyl-ester intermediate of the active site. Zn(2+) is bound at residue Ser-198. Met-199 lines the substrate pocket. 2 N-linked (GlcNAc...) asparagine glycosylation sites follow: Asn-273 and Asn-289. Residue Cys-355 participates in Zn(2+) binding. Residues Asp-360 and His-392 each act as charge relay system in the active site. His-392 provides a ligand contact to Zn(2+). An N-linked (GlcNAc...) asparagine glycan is attached at Asn-398.

It belongs to the AB hydrolase superfamily. Lipase family. Post-translationally, N-glycosylated. N-glycosylation is important for maturation of the enzyme and normal subcellular location. Detected in blood plasma. Detected in alveolar macrophages (at protein level). Detected in heart, liver, spleen, kidney, thymus, brain and lung.

It is found in the secreted. It localises to the lysosome. The protein localises to the membrane. The catalysed reaction is a 1,2-diacyl-sn-glycero-3-phosphocholine + H2O = a 2-acyl-sn-glycero-3-phosphocholine + a fatty acid + H(+). It carries out the reaction 1-hexadecanoyl-2-(9Z-octadecenoyl)-sn-glycero-3-phosphocholine + H2O = 2-(9Z-octadecenoyl)-sn-glycero-3-phosphocholine + hexadecanoate + H(+). It catalyses the reaction 1,2-di-(9Z-octadecenoyl)-sn-glycero-3-phosphocholine + H2O = 2-(9Z-octadecenoyl)-sn-glycero-3-phosphocholine + (9Z)-octadecenoate + H(+). The enzyme catalyses 1-hexadecanoyl-2-glutaroyl-sn-glycero-3-phosphocholine + H2O = 2-glutaroyl-sn-glycero-3-phosphocholine + hexadecanoate + H(+). The catalysed reaction is 1-hexadecanoyl-2-nonadioyl-sn-glycero-3-phosphocholine + H2O = 2-nonadioyl-sn-glycero-3-phosphocholine + hexadecanoate + H(+). It carries out the reaction 1-hexadecanoyl-2-(5-oxopentanoyl)-sn-glycero-3-phosphocholine + H2O = 2-(5-oxopentanoyl)-sn-glycero-3-phosphocholine + hexadecanoate + H(+). It catalyses the reaction 1-hexadecanoyl-2-(9-oxononanoyl)-sn-glycero-3-phosphocholine + H2O = 2-(9-oxononanoyl)-sn-glycero-3-phosphocholine + hexadecanoate + H(+). The enzyme catalyses 1,2-dihexadecanoyl-sn-glycero-3-phosphocholine + H2O = 2-hexadecanoyl-sn-glycero-3-phosphocholine + hexadecanoate + H(+). The catalysed reaction is a 1,2-diacyl-sn-glycero-3-phosphocholine + H2O = a 1-acyl-sn-glycero-3-phosphocholine + a fatty acid + H(+). It carries out the reaction 1-hexadecanoyl-2-(9Z-octadecenoyl)-sn-glycero-3-phosphocholine + H2O = 1-hexadecanoyl-sn-glycero-3-phosphocholine + (9Z)-octadecenoate + H(+). It catalyses the reaction 1,2-di-(9Z-octadecenoyl)-sn-glycero-3-phosphocholine + H2O = 1-(9Z-octadecenoyl)-sn-glycero-3-phosphocholine + (9Z)-octadecenoate + H(+). The enzyme catalyses 1,2-dihexadecanoyl-sn-glycero-3-phosphocholine + H2O = 1-hexadecanoyl-sn-glycero-3-phosphocholine + hexadecanoate + H(+). The catalysed reaction is a 1-acyl-sn-glycero-3-phosphocholine + H2O = sn-glycerol 3-phosphocholine + a fatty acid + H(+). It carries out the reaction 1-hexadecanoyl-sn-glycero-3-phosphocholine + H2O = sn-glycerol 3-phosphocholine + hexadecanoate + H(+). It catalyses the reaction N-(acetyl)-sphing-4-enine + a 1,2-diacyl-sn-glycero-3-phosphoethanolamine = 1-O-acyl-N-(acetyl)-sphing-4-enine + a 2-acyl-sn-glycero-3-phosphoethanolamine. The enzyme catalyses 1-hexadecanoyl-2-(9Z-octadecenoyl)-sn-glycero-3-phosphoethanolamine + N-(acetyl)-sphing-4-enine = 2-(9Z-octadecenoyl)-sn-glycero-3-phosphoethanolamine + 1-hexadecanoyl-N-(acetyl)-sphing-4-enine. The catalysed reaction is 1-hexadecanoyl-2-(9Z,12Z-octadecadienoyl)-sn-glycero-3-phosphoethanolamine + N-(acetyl)-sphing-4-enine = 2-(9Z,12Z)-octadecadienoyl-sn-glycero-3-phosphoethanolamine + 1-hexadecanoyl-N-(acetyl)-sphing-4-enine. It carries out the reaction 1-hexadecanoyl-2-(5Z,8Z,11Z,14Z-eicosatetraenoyl)-sn-glycero-3-phosphoethanolamine + N-(acetyl)-sphing-4-enine = 2-(5Z,8Z,11Z,14Z)-eicosatetraenoyl-sn-glycero-3-phosphoethanolamine + 1-hexadecanoyl-N-(acetyl)-sphing-4-enine. It catalyses the reaction N-(acetyl)-sphing-4-enine + a 1,2-diacyl-sn-glycero-3-phosphoethanolamine = 1-O-acyl-N-(acetyl)-sphing-4-enine + a 1-acyl-sn-glycero-3-phosphoethanolamine. The enzyme catalyses 1-hexadecanoyl-2-(9Z-octadecenoyl)-sn-glycero-3-phosphoethanolamine + N-(acetyl)-sphing-4-enine = 1-(9Z-octadecenoyl)-N-(acetyl)-sphing-4-enine + 1-hexadecanoyl-sn-glycero-3-phosphoethanolamine. The catalysed reaction is 1-hexadecanoyl-2-(9Z,12Z-octadecadienoyl)-sn-glycero-3-phosphoethanolamine + N-(acetyl)-sphing-4-enine = 1-(9Z,12Z-octadecadienoyl)-N-acetylsphing-4-enine + 1-hexadecanoyl-sn-glycero-3-phosphoethanolamine. It carries out the reaction 1-hexadecanoyl-2-(5Z,8Z,11Z,14Z-eicosatetraenoyl)-sn-glycero-3-phosphoethanolamine + N-(acetyl)-sphing-4-enine = 1-(5Z,8Z,11Z,14Z)-eicosatetraenoyl-N-(acetyl)-sphing-4-enine + 1-hexadecanoyl-sn-glycero-3-phosphoethanolamine. It catalyses the reaction N-(acetyl)-sphing-4-enine + a 1,2-diacyl-sn-glycero-3-phosphocholine = 1-O-acyl-N-(acetyl)-sphing-4-enine + a 2-acyl-sn-glycero-3-phosphocholine. The enzyme catalyses 1-hexadecanoyl-2-(9Z-octadecenoyl)-sn-glycero-3-phosphocholine + N-(acetyl)-sphing-4-enine = 1-hexadecanoyl-N-(acetyl)-sphing-4-enine + 2-(9Z-octadecenoyl)-sn-glycero-3-phosphocholine. The catalysed reaction is 1-hexadecanoyl-2-(9Z,12Z-octadecadienoyl)-sn-glycero-3-phosphocholine + N-(acetyl)-sphing-4-enine = 2-(9Z,12Z-octadecadienoyl)-sn-glycero-3-phosphocholine + 1-hexadecanoyl-N-(acetyl)-sphing-4-enine. It carries out the reaction 1-hexadecanoyl-2-(5Z,8Z,11Z,14Z-eicosatetraenoyl)-sn-glycero-3-phosphocholine + N-(acetyl)-sphing-4-enine = 1-hexadecanoyl-N-(acetyl)-sphing-4-enine + 2-(5Z,8Z,11Z,14Z)-eicosatetraenoyl-sn-glycero-3-phosphocholine. It catalyses the reaction 1-hexadecanoyl-2-(4Z,7Z,10Z,13Z,16Z,19Z-docosahexaenoyl)-sn-glycero-3-phosphocholine + N-(acetyl)-sphing-4-enine = 2-(4Z,7Z,10Z,13Z,16Z,19Z-docosahexaenoyl)-sn-glycero-3-phosphocholine + 1-hexadecanoyl-N-(acetyl)-sphing-4-enine. The enzyme catalyses 1-hexadecanoyl-2-nonadioyl-sn-glycero-3-phosphocholine + N-(acetyl)-sphing-4-enine = 2-nonadioyl-sn-glycero-3-phosphocholine + 1-hexadecanoyl-N-(acetyl)-sphing-4-enine. The catalysed reaction is 1-octadecanoyl-2-(9Z-octadecenoyl)-sn-glycero-3-phosphocholine + N-(acetyl)-sphing-4-enine = 1-octadecanoyl-N-(acetyl)-sphing-4-enine + 2-(9Z-octadecenoyl)-sn-glycero-3-phosphocholine. It carries out the reaction 1-(9Z)-octadecenoyl-2-octadecanoyl-sn-glycero-3-phosphocholine + N-(acetyl)-sphing-4-enine = 2-octadecanoyl-sn-glycero-3-phosphocholine + 1-(9Z-octadecenoyl)-N-(acetyl)-sphing-4-enine. It catalyses the reaction 1-octadecanoyl-2-(5Z,8Z,11Z,14Z-eicosatetraenoyl)-sn-glycero-3-phosphocholine + N-(acetyl)-sphing-4-enine = 1-octadecanoyl-N-(acetyl)-sphing-4-enine + 2-(5Z,8Z,11Z,14Z)-eicosatetraenoyl-sn-glycero-3-phosphocholine. The enzyme catalyses 1-(9Z-octadecenoyl)-2-hexadecanoyl-sn-glycero-3-phosphocholine + N-(acetyl)-sphing-4-enine = 1-(9Z-octadecenoyl)-N-(acetyl)-sphing-4-enine + 2-hexadecanoyl-sn-glycero-3-phosphocholine. The catalysed reaction is N-(acetyl)-sphing-4-enine + a 1,2-diacyl-sn-glycero-3-phosphocholine = 1-O-acyl-N-(acetyl)-sphing-4-enine + a 1-acyl-sn-glycero-3-phosphocholine. It carries out the reaction 1-hexadecanoyl-2-(9Z-octadecenoyl)-sn-glycero-3-phosphocholine + N-(acetyl)-sphing-4-enine = 1-(9Z-octadecenoyl)-N-(acetyl)-sphing-4-enine + 1-hexadecanoyl-sn-glycero-3-phosphocholine. It catalyses the reaction 1-hexadecanoyl-2-(9Z,12Z-octadecadienoyl)-sn-glycero-3-phosphocholine + N-(acetyl)-sphing-4-enine = 1-(9Z,12Z-octadecadienoyl)-N-acetylsphing-4-enine + 1-hexadecanoyl-sn-glycero-3-phosphocholine. The enzyme catalyses 1-hexadecanoyl-2-(5Z,8Z,11Z,14Z-eicosatetraenoyl)-sn-glycero-3-phosphocholine + N-(acetyl)-sphing-4-enine = 1-(5Z,8Z,11Z,14Z)-eicosatetraenoyl-N-(acetyl)-sphing-4-enine + 1-hexadecanoyl-sn-glycero-3-phosphocholine. The catalysed reaction is 1-hexadecanoyl-2-(4Z,7Z,10Z,13Z,16Z,19Z-docosahexaenoyl)-sn-glycero-3-phosphocholine + N-(acetyl)-sphing-4-enine = 1-(4Z,7Z,10Z,13Z,16Z,19Z-docosahexaenoyl)-N-(acetyl)-sphing-4-enine + 1-hexadecanoyl-sn-glycero-3-phosphocholine. It carries out the reaction 1-octadecanoyl-2-(9Z-octadecenoyl)-sn-glycero-3-phosphocholine + N-(acetyl)-sphing-4-enine = 1-(9Z-octadecenoyl)-N-(acetyl)-sphing-4-enine + 1-octadecanoyl-sn-glycero-3-phosphocholine. It catalyses the reaction 1-octadecanoyl-2-(9Z,12Z)-octadecadienoyl-sn-glycero-3-phosphocholine + N-(acetyl)-sphing-4-enine = 1-(9Z,12Z-octadecadienoyl)-N-acetylsphing-4-enine + 1-octadecanoyl-sn-glycero-3-phosphocholine. The enzyme catalyses 1-(9Z-octadecenoyl)-2-hexadecanoyl-sn-glycero-3-phosphocholine + N-(acetyl)-sphing-4-enine = 1-hexadecanoyl-N-(acetyl)-sphing-4-enine + 1-(9Z-octadecenoyl)-sn-glycero-3-phosphocholine. The catalysed reaction is 1-(9Z)-octadecenoyl-2-octadecanoyl-sn-glycero-3-phosphocholine + N-(acetyl)-sphing-4-enine = 1-octadecanoyl-N-(acetyl)-sphing-4-enine + 1-(9Z-octadecenoyl)-sn-glycero-3-phosphocholine. It carries out the reaction 1,2-di-(9Z-octadecenoyl)-sn-glycero-3-phosphocholine + N-(acetyl)-sphing-4-enine = 1-(9Z-octadecenoyl)-N-(acetyl)-sphing-4-enine + 1-(9Z-octadecenoyl)-sn-glycero-3-phosphocholine. It catalyses the reaction 1-octadecanoyl-2-(5Z,8Z,11Z,14Z-eicosatetraenoyl)-sn-glycero-3-phosphocholine + N-(acetyl)-sphing-4-enine = 1-(5Z,8Z,11Z,14Z)-eicosatetraenoyl-N-(acetyl)-sphing-4-enine + 1-octadecanoyl-sn-glycero-3-phosphocholine. The enzyme catalyses a 1,2-diacyl-sn-glycero-3-phospho-L-serine + N-(acetyl)-sphing-4-enine = a 2-acyl-sn-glycero-3-phospho-L-serine + 1-O-acyl-N-(acetyl)-sphing-4-enine. The catalysed reaction is 1-octadecanoyl-2-(9Z-octadecenoyl)-sn-glycero-3-phospho-L-serine + N-(acetyl)-sphing-4-enine = 2-(9Z-octadecenoyl)-sn-glycero-3-phospho-L-serine + 1-octadecanoyl-N-(acetyl)-sphing-4-enine. It carries out the reaction a 1,2-diacyl-sn-glycero-3-phospho-L-serine + N-(acetyl)-sphing-4-enine = 1-O-acyl-N-(acetyl)-sphing-4-enine + a 1-acyl-sn-glycero-3-phospho-L-serine. It catalyses the reaction 1-octadecanoyl-2-(9Z-octadecenoyl)-sn-glycero-3-phospho-L-serine + N-(acetyl)-sphing-4-enine = 1-octadecanoyl-sn-glycero-3-phosphoserine + 1-(9Z-octadecenoyl)-N-(acetyl)-sphing-4-enine. The enzyme catalyses a 1,2-diacyl-sn-glycero-3-phospho-(1'-sn-glycerol) + N-(acetyl)-sphing-4-enine = 2-acyl-sn-glycero-3-phospho-(1'-sn-glycerol) + 1-O-acyl-N-(acetyl)-sphing-4-enine. The catalysed reaction is 1-octadecanoyl-2-(9Z-octadecenoyl)-sn-glycero-3-phospho-(1'-sn-glycerol) + N-(acetyl)-sphing-4-enine = 2-(9Z-octadecenoyl)-sn-glycero-3-phospho-(1'-sn-glycerol) + 1-octadecanoyl-N-(acetyl)-sphing-4-enine. It carries out the reaction a 1,2-diacyl-sn-glycero-3-phospho-(1'-sn-glycerol) + N-(acetyl)-sphing-4-enine = 1-O-acyl-N-(acetyl)-sphing-4-enine + 1-acyl-sn-glycero-3-phospho-(1'-sn-glycerol). It catalyses the reaction 1-octadecanoyl-2-(9Z-octadecenoyl)-sn-glycero-3-phospho-(1'-sn-glycerol) + N-(acetyl)-sphing-4-enine = 1-octadecanoyl-sn-glycero-3-phospho-(1'-sn-glycerol) + 1-(9Z-octadecenoyl)-N-(acetyl)-sphing-4-enine. The enzyme catalyses an N-acylethanolamine + a 1,2-diacyl-sn-glycero-3-phosphocholine = 2-(acylamino)ethyl fatty acid + a 2-acyl-sn-glycero-3-phosphocholine. The catalysed reaction is an N-acylethanolamine + a 1,2-diacyl-sn-glycero-3-phosphocholine = 2-(acylamino)ethyl fatty acid + a 1-acyl-sn-glycero-3-phosphocholine. It carries out the reaction N-(5Z,8Z,11Z,14Z-eicosatetraenoyl)-ethanolamine + 1,2-di-(9Z-octadecenoyl)-sn-glycero-3-phosphocholine = 2-[(5Z,8Z,11Z,14Z)-eicosatetraenoylamino]ethyl (9Z)-octadecenoate + (9Z-octadecenoyl)-sn-glycero-3-phosphocholine. It catalyses the reaction N-(9Z-octadecenoyl) ethanolamine + 1,2-di-(9Z-octadecenoyl)-sn-glycero-3-phosphocholine = 2-[(9Z)-octadecenoylamino]ethyl (9Z)-octadecenoate + (9Z-octadecenoyl)-sn-glycero-3-phosphocholine. The enzyme catalyses a 3-acyl-sn-glycerol + a 1,2-diacyl-sn-glycero-3-phosphocholine = a 1,3-diacylglycerol + a 1-acyl-sn-glycero-3-phosphocholine. The catalysed reaction is a 3-acyl-sn-glycerol + a 1,2-diacyl-sn-glycero-3-phosphocholine = a 1,3-diacylglycerol + a 2-acyl-sn-glycero-3-phosphocholine. It carries out the reaction 3-(9Z-octadecenoyl)-sn-glycerol + 1,2-di-(9Z-octadecenoyl)-sn-glycero-3-phosphocholine = 1,3-di-(9Z-octadecenoyl)-glycerol + (9Z-octadecenoyl)-sn-glycero-3-phosphocholine. It catalyses the reaction 3-hexadecanoyl-sn-glycerol + 1,2-di-(9Z-octadecenoyl)-sn-glycero-3-phosphocholine = 1-(9Z)-octadecenoyl-3-hexadecanoyl-sn-glycerol + (9Z-octadecenoyl)-sn-glycero-3-phosphocholine. The enzyme catalyses a 1-acyl-sn-glycerol + a 1,2-diacyl-sn-glycero-3-phosphocholine = a 1,3-diacylglycerol + a 2-acyl-sn-glycero-3-phosphocholine. The catalysed reaction is a 1-acyl-sn-glycerol + a 1,2-diacyl-sn-glycero-3-phosphocholine = a 1,3-diacylglycerol + a 1-acyl-sn-glycero-3-phosphocholine. It carries out the reaction 1-(9Z-octadecenoyl)-sn-glycerol + 1,2-di-(9Z-octadecenoyl)-sn-glycero-3-phosphocholine = 1,3-di-(9Z-octadecenoyl)-glycerol + (9Z-octadecenoyl)-sn-glycero-3-phosphocholine. It catalyses the reaction 1-hexadecanoyl-sn-glycerol + 1,2-di-(9Z-octadecenoyl)-sn-glycero-3-phosphocholine = 1-hexadecanoyl-3-(9Z)-octadecenoyl-sn-glycerol + (9Z-octadecenoyl)-sn-glycero-3-phosphocholine. The enzyme catalyses a 2-acylglycerol + a 1,2-diacyl-sn-glycero-3-phosphocholine = a 1,2-diacylglycerol + a 2-acyl-sn-glycero-3-phosphocholine. The catalysed reaction is a 2-acylglycerol + a 1,2-diacyl-sn-glycero-3-phosphocholine = a 1,2-diacylglycerol + a 1-acyl-sn-glycero-3-phosphocholine. It carries out the reaction 2-hexadecanoylglycerol + 1,2-di-(9Z-octadecenoyl)-sn-glycero-3-phosphocholine = 1-(9Z)-octadecenoyl-2-hexadecanoylglycerol + (9Z-octadecenoyl)-sn-glycero-3-phosphocholine. It catalyses the reaction 1-O-alkylglycerol + a 1,2-diacyl-sn-glycero-3-phosphocholine = 1-O-alkyl-3-acylglycerol + a 1-acyl-sn-glycero-3-phosphocholine. The enzyme catalyses 1-O-alkylglycerol + a 1,2-diacyl-sn-glycero-3-phosphocholine = 1-O-alkyl-3-acylglycerol + a 2-acyl-sn-glycero-3-phosphocholine. The catalysed reaction is 1-O-hexadecylglycerol + 1,2-di-(9Z-octadecenoyl)-sn-glycero-3-phosphocholine = 1-O-hexadecyl-3-(9Z)-octadecenoylglycerol + (9Z-octadecenoyl)-sn-glycero-3-phosphocholine. It carries out the reaction 1-O-alkyl-2-acyl-sn-glycerol + a 1,2-diacyl-sn-glycero-3-phosphocholine = 1-O-alkyl-2,3-diacyl-sn-glycerol + a 2-acyl-sn-glycero-3-phosphocholine. It catalyses the reaction 1-O-alkyl-2-acyl-sn-glycerol + a 1,2-diacyl-sn-glycero-3-phosphocholine = 1-O-alkyl-2,3-diacyl-sn-glycerol + a 1-acyl-sn-glycero-3-phosphocholine. The enzyme catalyses 1-O-hexadecyl-2-acetyl-sn-glycerol + 1,2-di-(9Z-octadecenoyl)-sn-glycero-3-phosphocholine = 1-O-hexadecyl-2-acetyl-3-(9Z)-octadecenoyl-sn-glycerol + (9Z-octadecenoyl)-sn-glycero-3-phosphocholine. The catalysed reaction is 1-O-hexadecyl-2-O-methyl-sn-glycerol + 1,2-di-(9Z-octadecenoyl)-sn-glycero-3-phosphocholine = 1-O-hexadecyl-2-O-methyl-3-(9Z)-octadecenoyl-sn-glycerol + (9Z-octadecenoyl)-sn-glycero-3-phosphocholine. It carries out the reaction a 1,2-diacyl-sn-glycero-3-phosphoethanolamine + H2O = a 1-acyl-sn-glycero-3-phosphoethanolamine + a fatty acid + H(+). It catalyses the reaction 1-acyl-2-(5Z,8Z,11Z,14Z)-eicosatetraenoyl-sn-glycero-3-phosphoethanolamine + H2O = a 1-acyl-sn-glycero-3-phosphoethanolamine + (5Z,8Z,11Z,14Z)-eicosatetraenoate + H(+). The enzyme catalyses a 1,2-diacyl-sn-glycero-3-phospho-(1'-sn-glycerol) + H2O = 1-acyl-sn-glycero-3-phospho-(1'-sn-glycerol) + a fatty acid + H(+). The catalysed reaction is 1-hexadecanoyl-2-(9Z-octadecenoyl)-sn-glycero-3-phospho-(1'-sn-glycerol) + H2O = 1-hexadecanoyl-sn-glycero-3-phospho-(1'-sn-glycerol) + (9Z)-octadecenoate + H(+). It carries out the reaction a 1,2-diacyl-sn-glycero-3-phospho-(1'-sn-glycerol) + H2O = 2-acyl-sn-glycero-3-phospho-(1'-sn-glycerol) + a fatty acid + H(+). It catalyses the reaction 1-hexadecanoyl-2-(9Z-octadecenoyl)-sn-glycero-3-phospho-(1'-sn-glycerol) + H2O = 2-(9Z-octadecenoyl)-sn-glycero-3-phospho-(1'-sn-glycerol) + hexadecanoate + H(+). With respect to regulation, phospholipase sn-2 versus sn-1 positional specificity is affected by the phospholipid composition of membranes. Phospholipase A2 activity toward 1-hexadecanoyl-2-(5Z,8Z,11Z,14Z-eicosatetraenoyl)-sn-glycero-3-phosphocholine (PAPE) is enhanced in the presence of 1,2-dioleoyl-sn-glycero-3-phosphocholine (DOPC), which promotes lipid bilayer formation. O-acyltransferase activity is inhibited by antiarrhythmic drug amiodarone. In terms of biological role, has dual calcium-independent phospholipase and O-acyltransferase activities with a potential role in glycerophospholipid homeostasis and remodeling of acyl groups of lipophilic alcohols present in acidic cellular compartments. Catalyzes hydrolysis of the ester bond of the fatty acyl group attached at sn-1 or sn-2 position of phospholipids (phospholipase A1 or A2 activity) and transfer it to the hydroxyl group at the first carbon of lipophilic alcohols (O-acyltransferase activity). Among preferred fatty acyl donors are phosphatidylcholines, phosphatidylethanolamines, phosphatidylglycerols and phosphatidylserines. Favors sn-2 over sn-1 deacylation of unsaturated fatty acyl groups of phosphatidylcholines, phosphatidylethanolamines, and phosphatidylglycerols. Among preferred fatty acyl acceptors are natural lipophilic alcohols including short-chain ceramide N-acetyl-sphingosine (C2 ceramide), alkylacylglycerols, monoacylglycerols, and acylethanolamides such as anandamide and oleoylethanolamide. Selectively hydrolyzes the sn-1 fatty acyl group of truncated oxidized phospholipids and may play a role in detoxification of reactive oxidized phospholipids during oxidative stress. Required for normal phospholipid degradation in alveolar macrophages with potential implications in the clearance of pulmonary surfactant, which is mainly composed of dipalmitoylphosphatidylcholine (1,2-dihexadecanoyl-sn-glycero-3-phosphocholine). Involved in the first step of bis(monoacylglycero)phosphate (BMP) de novo synthesis from phosphatidylglycerol (1,2-diacyl-sn-glycero-3-phospho-(1'-sn-glycerol), PG). BMP is an important player in cargo sorting and degradation, regulation of cellular cholesterol levels and intercellular communication. At neutral pH, hydrolyzes the sn-1 fatty acyl group of the lysophosphatidylcholines. The protein is Lysosomal phospholipase A and acyltransferase of Mus musculus (Mouse).